Consider the following 81-residue polypeptide: CLAVATA3/ESR (CLE)-related protein 12 (81 aa).

A signal peptide spans 1 to 31; it reads MENSNKVPISKIGLIMLMIFSTFFMSPHARR. Residues 55-67 show a composition bias toward basic and acidic residues; that stretch reads KRSRTDLEDKAVP. The interval 55 to 81 is disordered; sequence KRSRTDLEDKAVPGDRLSPGGPNHIHN. Residues proline 73 and proline 76 each carry the hydroxyproline modification. O-linked (Ara...) hydroxyproline glycosylation is present at proline 76.

The protein belongs to the CLV3/ESR signal peptide family. Post-translationally, the O-glycosylation (arabinosylation) of the hydroxyproline Pro-76 enhances binding affinity of the CLE12p peptide for its receptor. Expressed in young nodules throughout the central tissue. Expressed in the apical region of elongated nodules, corresponding to the meristematic and early infection zones.

The protein resides in the secreted. It is found in the extracellular space. In terms of biological role, signaling peptide involved in the regulation of nodulation. Moves from root to shoot to function with the receptor kinase SUNN, in a signaling pathway that plays roles during cellular differentiation, both at the onset of nodulation, and later during nodule meristem development and subsequent homeostasis. Interacts with SUNN signaling to control nodule numbers. SUNN is involved in the autoregulation of nodulation (AON), a long distance systemic signaling from root to shoot and back again, which allows legumes to limit the number of root nodules formed based on available nitrogen and previous rhizobial colonization. The polypeptide is CLAVATA3/ESR (CLE)-related protein 12 (Medicago truncatula (Barrel medic)).